Consider the following 469-residue polypeptide: ATP synthase subunit beta (469 aa).

156–163 (GGAGVGKT) provides a ligand contact to ATP.

This sequence belongs to the ATPase alpha/beta chains family. As to quaternary structure, F-type ATPases have 2 components, CF(1) - the catalytic core - and CF(0) - the membrane proton channel. CF(1) has five subunits: alpha(3), beta(3), gamma(1), delta(1), epsilon(1). CF(0) has three main subunits: a(1), b(2) and c(9-12). The alpha and beta chains form an alternating ring which encloses part of the gamma chain. CF(1) is attached to CF(0) by a central stalk formed by the gamma and epsilon chains, while a peripheral stalk is formed by the delta and b chains.

The protein localises to the cell membrane. The catalysed reaction is ATP + H2O + 4 H(+)(in) = ADP + phosphate + 5 H(+)(out). Its function is as follows. Produces ATP from ADP in the presence of a proton gradient across the membrane. The catalytic sites are hosted primarily by the beta subunits. The protein is ATP synthase subunit beta of Lactococcus lactis subsp. lactis (strain IL1403) (Streptococcus lactis).